A 256-amino-acid chain; its full sequence is Cytokine-inducible SH2-containing protein (256 aa).

The SH2 domain occupies 81 to 162 (WYWGSITASE…PDVVSLVQHY (82 aa)). The tract at residues 168-190 (ADTRSDSPDPAPTPALPVSKPDA) is disordered. The SOCS box domain maps to 207 to 255 (KLVQPFVRRSSARSLQHLCRLVINRLVTDVDCLPLPRRMADYLRQYPFQ).

In terms of assembly, stably associated with the tyrosine-phosphorylated IL3 receptor beta chain and tyrosine-phosphorylated EPO receptor (EPOR).

The protein operates within protein modification; protein ubiquitination. Functionally, SOCS family proteins form part of a classical negative feedback system that regulates cytokine signal transduction. CIS is involved in the negative regulation of cytokines that signal through the JAK-STAT5 pathway such as erythropoietin, prolactin and interleukin 3 (IL3) receptor. Inhibits STAT5 trans-activation by suppressing its tyrosine phosphorylation. May be a substrate recognition component of a SCF-like ECS (Elongin BC-CUL2/5-SOCS-box protein) E3 ubiquitin-protein ligase complex which mediates the ubiquitination and subsequent proteasomal degradation of target proteins. This chain is Cytokine-inducible SH2-containing protein (Cish), found in Rattus norvegicus (Rat).